Consider the following 246-residue polypeptide: tRNA (guanine-N(1)-)-methyltransferase (246 aa).

S-adenosyl-L-methionine is bound by residues glycine 113 and 132-137 (LGDYVL).

Belongs to the RNA methyltransferase TrmD family. Homodimer.

It localises to the cytoplasm. The catalysed reaction is guanosine(37) in tRNA + S-adenosyl-L-methionine = N(1)-methylguanosine(37) in tRNA + S-adenosyl-L-homocysteine + H(+). Functionally, specifically methylates guanosine-37 in various tRNAs. The polypeptide is tRNA (guanine-N(1)-)-methyltransferase (Lactiplantibacillus plantarum (strain ATCC BAA-793 / NCIMB 8826 / WCFS1) (Lactobacillus plantarum)).